The following is a 371-amino-acid chain: MKLKTLQLENYRNYEEVTLECHPDVNILIGENAQGKTNLLESIYTLALAKSHRTSNDKELIRFNSEYAKIEGVLNYRHGTMPLTMFITKKGKQVKVNHLEQSRLTQYVGHLNVVLFAPEDLNIVKGSPQIRRRFIDMELGQISAVYLNDLAQYQRILKQKNNYLKQLQLGQKQDTTMLEVLNQQFAQYALNVTLRREHFIKELESLAKPIHAGITNERETLSLTYLPSIKLSDMSKGEQTLWDEVITLLNDNIKREMDRGVCLFGPHRDDLGFNVNDMDAQTYGSQGQQRTTALSIKLAEIELMNIEVGEYPILLLDDVLSELDDSRQTHLLSTIQHKVQTFVTTTSVDGIDHEIMNNAKLYRINQGEIIK.

Residue 30 to 37 coordinates ATP; it reads GENAQGKT.

The protein belongs to the RecF family.

The protein resides in the cytoplasm. In terms of biological role, the RecF protein is involved in DNA metabolism; it is required for DNA replication and normal SOS inducibility. RecF binds preferentially to single-stranded, linear DNA. It also seems to bind ATP. This chain is DNA replication and repair protein RecF, found in Staphylococcus haemolyticus (strain JCSC1435).